Reading from the N-terminus, the 132-residue chain is ATP synthase epsilon chain (132 aa).

The protein belongs to the ATPase epsilon chain family. As to quaternary structure, F-type ATPases have 2 components, CF(1) - the catalytic core - and CF(0) - the membrane proton channel. CF(1) has five subunits: alpha(3), beta(3), gamma(1), delta(1), epsilon(1). CF(0) has three main subunits: a, b and c.

It is found in the cell membrane. Produces ATP from ADP in the presence of a proton gradient across the membrane. The polypeptide is ATP synthase epsilon chain (atpC) (Bacillus sp. (strain PS3)).